Here is a 142-residue protein sequence, read N- to C-terminus: Photosystem II extrinsic protein U (142 aa).

Residues 1 to 29 (MKGLVRLLTVFSLLLGCWGWLGTTQIAQA) form the signal peptide.

Belongs to the PsbU family. As to quaternary structure, PSII is composed of 1 copy each of membrane proteins PsbA, PsbB, PsbC, PsbD, PsbE, PsbF, PsbH, PsbI, PsbJ, PsbK, PsbL, PsbM, PsbT, PsbX, PsbY, PsbZ, Psb30/Ycf12, peripheral proteins PsbO, CyanoQ (PsbQ), PsbU, PsbV and a large number of cofactors. It forms dimeric complexes.

Its subcellular location is the cellular thylakoid membrane. Functionally, one of the extrinsic, lumenal subunits of photosystem II (PSII). PSII is a light-driven water plastoquinone oxidoreductase, using light energy to abstract electrons from H(2)O, generating a proton gradient subsequently used for ATP formation. The extrinsic proteins stabilize the structure of photosystem II oxygen-evolving complex (OEC), the ion environment of oxygen evolution and protect the OEC against heat-induced inactivation. The chain is Photosystem II extrinsic protein U from Nostoc sp. (strain PCC 7120 / SAG 25.82 / UTEX 2576).